The sequence spans 583 residues: CTP synthase (583 aa).

The tract at residues 1-278 (MRKHPQTATK…DAYVVRRLNL (278 aa)) is amidoligase domain. A CTP-binding site is contributed by Ser20. UTP is bound at residue Ser20. ATP contacts are provided by residues 21–26 (SLGKGL) and Asp78. Residues Asp78 and Glu152 each coordinate Mg(2+). Residues 159 to 161 (DIE), 199 to 204 (KTKPTQ), and Lys235 contribute to the CTP site. UTP-binding positions include 199-204 (KTKPTQ) and Lys235. Residues 303–551 (RIALVGKYVE…VGAAMDYKAG (249 aa)) form the Glutamine amidotransferase type-1 domain. L-glutamine is bound at residue Gly366. Cys393 (nucleophile; for glutamine hydrolysis) is an active-site residue. Residues 394 to 397 (LGLQ), Glu416, and Arg477 contribute to the L-glutamine site. Catalysis depends on residues His524 and Glu526. Residues 560–583 (EQSSNGIQHRDSAARPIPEPAARG) are disordered.

It belongs to the CTP synthase family. Homotetramer.

The enzyme catalyses UTP + L-glutamine + ATP + H2O = CTP + L-glutamate + ADP + phosphate + 2 H(+). It carries out the reaction L-glutamine + H2O = L-glutamate + NH4(+). The catalysed reaction is UTP + NH4(+) + ATP = CTP + ADP + phosphate + 2 H(+). The protein operates within pyrimidine metabolism; CTP biosynthesis via de novo pathway; CTP from UDP: step 2/2. Its activity is regulated as follows. Allosterically activated by GTP, when glutamine is the substrate; GTP has no effect on the reaction when ammonia is the substrate. The allosteric effector GTP functions by stabilizing the protein conformation that binds the tetrahedral intermediate(s) formed during glutamine hydrolysis. Inhibited by the product CTP, via allosteric rather than competitive inhibition. In terms of biological role, catalyzes the ATP-dependent amination of UTP to CTP with either L-glutamine or ammonia as the source of nitrogen. Regulates intracellular CTP levels through interactions with the four ribonucleotide triphosphates. This chain is CTP synthase, found in Mycolicibacterium paratuberculosis (strain ATCC BAA-968 / K-10) (Mycobacterium paratuberculosis).